We begin with the raw amino-acid sequence, 344 residues long: Holliday junction branch migration complex subunit RuvB (344 aa).

Residues 1-183 (MPDRELISGD…FGLVLRLDPY (183 aa)) are large ATPase domain (RuvB-L). ATP contacts are provided by residues Leu22, Arg23, Gly64, Lys67, Thr68, Thr69, 130–132 (EDF), Arg173, Tyr183, and Arg220. Thr68 is a Mg(2+) binding site. The interval 184 to 254 (NTEELKAIVK…VAQTALNLLD (71 aa)) is small ATPAse domain (RuvB-S). The head domain (RuvB-H) stretch occupies residues 257-344 (RYGLDEIDQK…EGDHPSLFEA (88 aa)). Residues Arg312 and Arg317 each contribute to the DNA site.

This sequence belongs to the RuvB family. As to quaternary structure, homohexamer. Forms an RuvA(8)-RuvB(12)-Holliday junction (HJ) complex. HJ DNA is sandwiched between 2 RuvA tetramers; dsDNA enters through RuvA and exits via RuvB. An RuvB hexamer assembles on each DNA strand where it exits the tetramer. Each RuvB hexamer is contacted by two RuvA subunits (via domain III) on 2 adjacent RuvB subunits; this complex drives branch migration. In the full resolvosome a probable DNA-RuvA(4)-RuvB(12)-RuvC(2) complex forms which resolves the HJ.

It is found in the cytoplasm. It carries out the reaction ATP + H2O = ADP + phosphate + H(+). Its function is as follows. The RuvA-RuvB-RuvC complex processes Holliday junction (HJ) DNA during genetic recombination and DNA repair, while the RuvA-RuvB complex plays an important role in the rescue of blocked DNA replication forks via replication fork reversal (RFR). RuvA specifically binds to HJ cruciform DNA, conferring on it an open structure. The RuvB hexamer acts as an ATP-dependent pump, pulling dsDNA into and through the RuvAB complex. RuvB forms 2 homohexamers on either side of HJ DNA bound by 1 or 2 RuvA tetramers; 4 subunits per hexamer contact DNA at a time. Coordinated motions by a converter formed by DNA-disengaged RuvB subunits stimulates ATP hydrolysis and nucleotide exchange. Immobilization of the converter enables RuvB to convert the ATP-contained energy into a lever motion, pulling 2 nucleotides of DNA out of the RuvA tetramer per ATP hydrolyzed, thus driving DNA branch migration. The RuvB motors rotate together with the DNA substrate, which together with the progressing nucleotide cycle form the mechanistic basis for DNA recombination by continuous HJ branch migration. Branch migration allows RuvC to scan DNA until it finds its consensus sequence, where it cleaves and resolves cruciform DNA. This is Holliday junction branch migration complex subunit RuvB from Solibacter usitatus (strain Ellin6076).